Consider the following 368-residue polypeptide: MSKKGRVLVAMSGGIDSSVAAVMLHEQGYEVIGMTMKTWDYANLGGSKKETGCCSLDSINDARNIAVSLGFPHYIVDIREEFGDYVINHFNKEYLDGRTPNPCVLCNTHIKWDSLLRRADKMDCDFIATGHYAQVRSENNRFVISKGLDENKDQSYALWGISQQSLSRTMFPLGHLHKTDIRAMAAERGFMDLVNKSESYEICFVPDNDYRGFLKRRNPGLEEEVRGGEFVMEDGTVVGKHEGYPFYTIGQRKGLGITLGYPVFVTEIQKENNRVVLGREEGLNRNGMWVDQLIMSKYENLKGIQKQSITKVRYNDDGTSSTIEQVGDEMRVLFHEHVKAIAPGQAAVFYEGNDVIGGGWIKSSFKQD.

Residues 10–17 (AMSGGIDS) and Met-36 each bind ATP. Cys-106 acts as the Nucleophile in catalysis. An intrachain disulfide couples Cys-106 to Cys-203. Position 130 (Gly-130) interacts with ATP. The interaction with tRNA stretch occupies residues 152–154 (KDQ). The active-site Cysteine persulfide intermediate is Cys-203. Residues 313 to 314 (RY) form an interaction with tRNA region.

Belongs to the MnmA/TRMU family.

The protein localises to the cytoplasm. The enzyme catalyses S-sulfanyl-L-cysteinyl-[protein] + uridine(34) in tRNA + AH2 + ATP = 2-thiouridine(34) in tRNA + L-cysteinyl-[protein] + A + AMP + diphosphate + H(+). Functionally, catalyzes the 2-thiolation of uridine at the wobble position (U34) of tRNA, leading to the formation of s(2)U34. The chain is tRNA-specific 2-thiouridylase MnmA from Cytophaga hutchinsonii (strain ATCC 33406 / DSM 1761 / CIP 103989 / NBRC 15051 / NCIMB 9469 / D465).